The following is a 192-amino-acid chain: Nucleoside triphosphate pyrophosphatase (192 aa).

Aspartate 73 (proton acceptor) is an active-site residue.

The protein belongs to the Maf family. A divalent metal cation is required as a cofactor.

The protein localises to the cytoplasm. It carries out the reaction a ribonucleoside 5'-triphosphate + H2O = a ribonucleoside 5'-phosphate + diphosphate + H(+). The catalysed reaction is a 2'-deoxyribonucleoside 5'-triphosphate + H2O = a 2'-deoxyribonucleoside 5'-phosphate + diphosphate + H(+). Nucleoside triphosphate pyrophosphatase. May have a dual role in cell division arrest and in preventing the incorporation of modified nucleotides into cellular nucleic acids. The sequence is that of Nucleoside triphosphate pyrophosphatase from Ehrlichia chaffeensis (strain ATCC CRL-10679 / Arkansas).